The primary structure comprises 89 residues: Small ribosomal subunit protein uS15 (89 aa).

Belongs to the universal ribosomal protein uS15 family. As to quaternary structure, part of the 30S ribosomal subunit. Forms a bridge to the 50S subunit in the 70S ribosome, contacting the 23S rRNA.

In terms of biological role, one of the primary rRNA binding proteins, it binds directly to 16S rRNA where it helps nucleate assembly of the platform of the 30S subunit by binding and bridging several RNA helices of the 16S rRNA. Functionally, forms an intersubunit bridge (bridge B4) with the 23S rRNA of the 50S subunit in the ribosome. This is Small ribosomal subunit protein uS15 from Bartonella tribocorum (strain CIP 105476 / IBS 506).